A 542-amino-acid polypeptide reads, in one-letter code: Cryptochrome-1 (542 aa).

A Photolyase/cryptochrome alpha/beta domain is found at 5–140 (GANVIWFRHG…DFVEKVSHTL (136 aa)). Residues R237, S265, S267, Q311, H378, 410-412 (DAD), C416, and N419 contribute to the FAD site.

It belongs to the DNA photolyase class-1 family. Interacts with tim and per; promoted by light conditions. Interaction with tim irreversibly commits tim to proteasomal degradation. Interacts with l(1)G0136/CG8198. The cofactor is FAD. In terms of tissue distribution, expressed at higher levels in the head than in body and it is more expressed in antennae than in legs, wings and mouth appendages. Prominent expression is seen in cells of the lateral brain, which are close to or coincident with the clock neurons. Abundance oscillates in a circadian manner.

It localises to the cytoplasm. Its subcellular location is the perinuclear region. The protein resides in the nucleus. Blue light-dependent regulator that is the input of the circadian feedback loop. Has no photolyase activity for cyclobutane pyrimidine dimers or 6-4 photoproducts. Regulation of expression by light suggests a role in photoreception for locomotor activity rhythms. Functions, together with per, as a transcriptional repressor required for the oscillation of peripheral circadian clocks and for the correct specification of clock cells. Genes directly activated by the transcription factors Clock (Clk) and cycle (cyc) are repressed by cry. Necessary for light-dependent magnetosensitivity, an intact circadian system is not required for the magnetoreception mechanism to operate. Required for both the naive and trained responses to magnetic field, consistent with the notion that cry is in the input pathway of magnetic sensing. The sequence is that of Cryptochrome-1 from Drosophila melanogaster (Fruit fly).